Reading from the N-terminus, the 797-residue chain is Protocadherin beta-11 (797 aa).

The N-terminal stretch at 1–26 (MENQGTRTQQIRQVLLLFVLLGMSQA) is a signal peptide. The Extracellular segment spans residues 27 to 690 (GSETWSFSVA…AQADSLTVYL (664 aa)). Cadherin domains lie at 35-133 (VAEE…SPIF), 138-242 (MLLE…SPEF), 247-347 (YEVK…APEI), 352-451 (ITSP…APTF), and 456-561 (YTLF…SPFV). Asparagine 418, asparagine 436, asparagine 487, and asparagine 567 each carry an N-linked (GlcNAc...) asparagine glycan. The region spanning 568–671 (GSAPCTELVP…LVDGFSQPYL (104 aa)) is the Cadherin 6 domain. A helical transmembrane segment spans residues 691–711 (VVALASVSSLFLFSVLLFVAV). At 712 to 797 (RLCRRSRAAS…TFRNSFGFNF (86 aa)) the chain is on the cytoplasmic side.

The protein localises to the cell membrane. In terms of biological role, potential calcium-dependent cell-adhesion protein. May be involved in the establishment and maintenance of specific neuronal connections in the brain. This chain is Protocadherin beta-11 (PCDHB11), found in Homo sapiens (Human).